A 105-amino-acid chain; its full sequence is Large ribosomal subunit protein uL24 (105 aa).

It belongs to the universal ribosomal protein uL24 family. As to quaternary structure, part of the 50S ribosomal subunit.

Its function is as follows. One of two assembly initiator proteins, it binds directly to the 5'-end of the 23S rRNA, where it nucleates assembly of the 50S subunit. In terms of biological role, one of the proteins that surrounds the polypeptide exit tunnel on the outside of the subunit. This is Large ribosomal subunit protein uL24 from Xanthobacter autotrophicus (strain ATCC BAA-1158 / Py2).